A 335-amino-acid polypeptide reads, in one-letter code: Anthranilate phosphoribosyltransferase (335 aa).

5-phospho-alpha-D-ribose 1-diphosphate is bound by residues Gly79, 82–83 (GD), Thr87, 89–92 (NIST), 107–115 (KHGSRSVSS), and Ser119. Anthranilate is bound at residue Gly79. Ser91 contacts Mg(2+). Arg165 contacts anthranilate. Positions 223 and 224 each coordinate Mg(2+).

The protein belongs to the anthranilate phosphoribosyltransferase family. In terms of assembly, homodimer. Mg(2+) serves as cofactor.

It carries out the reaction N-(5-phospho-beta-D-ribosyl)anthranilate + diphosphate = 5-phospho-alpha-D-ribose 1-diphosphate + anthranilate. Its pathway is amino-acid biosynthesis; L-tryptophan biosynthesis; L-tryptophan from chorismate: step 2/5. Catalyzes the transfer of the phosphoribosyl group of 5-phosphorylribose-1-pyrophosphate (PRPP) to anthranilate to yield N-(5'-phosphoribosyl)-anthranilate (PRA). The polypeptide is Anthranilate phosphoribosyltransferase (Helicobacter pylori (strain Shi470)).